The chain runs to 867 residues: V-set and immunoglobulin domain-containing protein 10-like (867 aa).

An N-terminal signal peptide occupies residues 1–27; sequence MDNPQALPLFLLLASLVGILTLRASSG. Residues 28 to 776 lie on the Extracellular side of the membrane; it reads LQQTNFSSAF…RAGPTLSHGA (749 aa). An N-linked (GlcNAc...) asparagine glycan is attached at Asn-32. Residues 35–45 are compositionally biased toward low complexity; it reads SAFSSDSKSSS. The disordered stretch occupies residues 35 to 60; sequence SAFSSDSKSSSQGLGVEVPSIKPPSW. Residues Asn-88, Asn-96, and Asn-144 are each glycosylated (N-linked (GlcNAc...) asparagine). The segment at 104 to 186 is disordered; that stretch reads LSPVSPFSET…PESKFSAETH (83 aa). Over residues 137–153 the composition is skewed to polar residues; the sequence is TVKTPASNISTQVSHTK. Basic and acidic residues predominate over residues 159-170; that stretch reads PDSKFSPDDMDL. Residues 173–186 show a composition bias toward polar residues; sequence SAQSPESKFSAETH. Ig-like C2-type domains follow at residues 302–394 and 402–487; these read PQLS…ADVS and PTIT…SLLN. Cys-324 and Cys-378 form a disulfide bridge. N-linked (GlcNAc...) asparagine glycosylation occurs at Asn-423. Cysteines 428 and 471 form a disulfide. A glycan (N-linked (GlcNAc...) asparagine) is linked at Asn-487. The disordered stretch occupies residues 602 to 627; that stretch reads ASGCPPPSRASWAREGRPLAPGGGSR. N-linked (GlcNAc...) asparagine glycans are attached at residues Asn-641 and Asn-650. The chain crosses the membrane as a helical span at residues 777–797; it reads IAGIVLGSLLGLALLAVLLLL. Topologically, residues 798-867 are cytoplasmic; it reads CICCLCRFRG…QAQTPVQLSL (70 aa).

In terms of tissue distribution, expressed in the esophagus, particularly in the suprabasilar layers of the epithelium. Expression is largely reduced in esophageal metaplasia, dysplasia, and adenocarcinoma lesions.

It localises to the membrane. The chain is V-set and immunoglobulin domain-containing protein 10-like (VSIG10L) from Homo sapiens (Human).